Reading from the N-terminus, the 417-residue chain is Serine hydroxymethyltransferase (417 aa).

(6S)-5,6,7,8-tetrahydrofolate-binding positions include Leu121 and 125 to 127 (GHL). Lys229 is subject to N6-(pyridoxal phosphate)lysine. 355–357 (SPF) provides a ligand contact to (6S)-5,6,7,8-tetrahydrofolate.

This sequence belongs to the SHMT family. In terms of assembly, homodimer. It depends on pyridoxal 5'-phosphate as a cofactor.

It localises to the cytoplasm. It catalyses the reaction (6R)-5,10-methylene-5,6,7,8-tetrahydrofolate + glycine + H2O = (6S)-5,6,7,8-tetrahydrofolate + L-serine. It functions in the pathway one-carbon metabolism; tetrahydrofolate interconversion. It participates in amino-acid biosynthesis; glycine biosynthesis; glycine from L-serine: step 1/1. Its function is as follows. Catalyzes the reversible interconversion of serine and glycine with tetrahydrofolate (THF) serving as the one-carbon carrier. This reaction serves as the major source of one-carbon groups required for the biosynthesis of purines, thymidylate, methionine, and other important biomolecules. Also exhibits THF-independent aldolase activity toward beta-hydroxyamino acids, producing glycine and aldehydes, via a retro-aldol mechanism. The protein is Serine hydroxymethyltransferase of Proteus mirabilis (strain HI4320).